Reading from the N-terminus, the 691-residue chain is Pentatricopeptide repeat-containing protein At4g37170 (691 aa).

PPR repeat units lie at residues 84 to 118 (PAST…GFVP), 119 to 149 (GIVI…MPNR), 150 to 184 (DLCS…DSYS), 185 to 211 (WTAM…MQRV), 217 to 251 (NIFT…GLDS), 252 to 286 (DEVL…DVVS), 287 to 317 (WTSM…CERP), 318 to 352 (NEYT…GFDP), 353 to 383 (YSFA…CPKP), 384 to 418 (DLVS…GTKP), 419 to 449 (DHVT…ITEK), and 455 to 485 (TSDH…MPMK). Positions 490-565 (LWASVLGGCS…RPGSSWTEIK (76 aa)) are type E motif. Residues 566–596 (RKRHVFIAADTSHPMYNQIVEFLRELRKKMK) form a type E(+) motif region. The segment at 597–691 (EEGYVPATSL…NGQCSCGDYW (95 aa)) is type DYW motif.

Belongs to the PPR family. PCMP-H subfamily.

This chain is Pentatricopeptide repeat-containing protein At4g37170 (PCMP-H5), found in Arabidopsis thaliana (Mouse-ear cress).